The sequence spans 365 residues: Phospho-N-acetylmuramoyl-pentapeptide-transferase (365 aa).

10 helical membrane passes run 19-39 (TLLI…SSWA), 49-69 (LLIA…AVVP), 92-112 (AGTP…IAVV), 116-136 (FNPD…IGWV), 156-176 (LFLQ…YGPT), 183-203 (IMQF…FALV), 215-235 (VDGL…LLVA), 238-258 (NPAL…FVHH), 279-299 (LAAV…SGIF), and 345-365 (QIVG…MATA).

Belongs to the glycosyltransferase 4 family. MraY subfamily. The cofactor is Mg(2+).

Its subcellular location is the cell inner membrane. It catalyses the reaction UDP-N-acetyl-alpha-D-muramoyl-L-alanyl-gamma-D-glutamyl-meso-2,6-diaminopimeloyl-D-alanyl-D-alanine + di-trans,octa-cis-undecaprenyl phosphate = di-trans,octa-cis-undecaprenyl diphospho-N-acetyl-alpha-D-muramoyl-L-alanyl-D-glutamyl-meso-2,6-diaminopimeloyl-D-alanyl-D-alanine + UMP. It functions in the pathway cell wall biogenesis; peptidoglycan biosynthesis. Its function is as follows. Catalyzes the initial step of the lipid cycle reactions in the biosynthesis of the cell wall peptidoglycan: transfers peptidoglycan precursor phospho-MurNAc-pentapeptide from UDP-MurNAc-pentapeptide onto the lipid carrier undecaprenyl phosphate, yielding undecaprenyl-pyrophosphoryl-MurNAc-pentapeptide, known as lipid I. The chain is Phospho-N-acetylmuramoyl-pentapeptide-transferase from Synechocystis sp. (strain ATCC 27184 / PCC 6803 / Kazusa).